Here is a 144-residue protein sequence, read N- to C-terminus: uncharacterized protein (144 aa).

The 108-residue stretch at 13–120 (IFCGIVEGNV…VPKYETGLGF (108 aa)) folds into the HIT domain. The short motif at 105–109 (HYHMH) is the Histidine triad motif element.

This is an uncharacterized protein from Mycoplasma pneumoniae (strain ATCC 29342 / M129 / Subtype 1) (Mycoplasmoides pneumoniae).